The sequence spans 218 residues: GCN5-related N-acetyltransferase 9 (218 aa).

One can recognise an N-acetyltransferase domain in the interval 36-183; the sequence is SALLEATGSE…KEVTLEYPVT (148 aa). Residues 112–114, 120–125, 152–154, and Phe159 contribute to the acetyl-CoA site; these read MIA, GKGLGK, and NTA.

It belongs to the acetyltransferase family. GNAT subfamily. Oligomer. Expressed throughout the plant.

The protein resides in the cytoplasm. Its subcellular location is the nucleus. It carries out the reaction an N-terminal L-alpha-aminoacyl-[protein] + acetyl-CoA = N-terminal N(alpha)-acetyl-L-alpha-aminoacyl-[protein] + CoA + H(+). The enzyme catalyses L-lysyl-[protein] + acetyl-CoA = N(6)-acetyl-L-lysyl-[protein] + CoA + H(+). Probable protein acetyltransferase with dual specificity triggering both N-alpha-acetylation (NTA) and epsilon-lysine acetylation (KA). The protein is GCN5-related N-acetyltransferase 9 of Arabidopsis thaliana (Mouse-ear cress).